A 466-amino-acid chain; its full sequence is Cysteine--tRNA ligase (466 aa).

Cysteine 29 contacts Zn(2+). The 'HIGH' region motif lies at alanine 31–histidine 41. Residues cysteine 208, histidine 233, and glutamate 237 each contribute to the Zn(2+) site. The short motif at lysine 264–serine 268 is the 'KMSKS' region element. Lysine 267 contributes to the ATP binding site.

The protein belongs to the class-I aminoacyl-tRNA synthetase family. Monomer. Zn(2+) serves as cofactor.

It localises to the cytoplasm. The enzyme catalyses tRNA(Cys) + L-cysteine + ATP = L-cysteinyl-tRNA(Cys) + AMP + diphosphate. This is Cysteine--tRNA ligase from Streptomyces griseus subsp. griseus (strain JCM 4626 / CBS 651.72 / NBRC 13350 / KCC S-0626 / ISP 5235).